A 154-amino-acid polypeptide reads, in one-letter code: Calmodulin-like protein 6 (154 aa).

EF-hand domains lie at 1–36 (MDSTELNRVFQMFDKDGDGKITTKELNESFKNLGII), 37–72 (IPEDELTQIIQKIDVNGDGCVDIEEFGELYKTIMVE), 77–112 (VGEEDMKEAFNVFDRNGDGFITVDELKAVLSSLGLK), and 115–150 (KTLEECRKMIMQVDVDGDGRVNYMEFRQMMKKGRFF). Positions 14, 16, 18, 20, 25, 50, 52, 54, 56, 61, 90, 92, 94, 101, 128, 130, 132, 134, and 139 each coordinate Ca(2+).

The protein belongs to the calmodulin family.

Potential calcium sensor. In Arabidopsis thaliana (Mouse-ear cress), this protein is Calmodulin-like protein 6 (CML6).